A 270-amino-acid chain; its full sequence is Ribosomal RNA small subunit methyltransferase A (270 aa).

Positions 16, 18, 43, 64, 89, and 110 each coordinate S-adenosyl-L-methionine.

Belongs to the class I-like SAM-binding methyltransferase superfamily. rRNA adenine N(6)-methyltransferase family. RsmA subfamily.

It localises to the cytoplasm. The catalysed reaction is adenosine(1518)/adenosine(1519) in 16S rRNA + 4 S-adenosyl-L-methionine = N(6)-dimethyladenosine(1518)/N(6)-dimethyladenosine(1519) in 16S rRNA + 4 S-adenosyl-L-homocysteine + 4 H(+). Specifically dimethylates two adjacent adenosines (A1518 and A1519) in the loop of a conserved hairpin near the 3'-end of 16S rRNA in the 30S particle. May play a critical role in biogenesis of 30S subunits. This Pseudomonas fluorescens (strain ATCC BAA-477 / NRRL B-23932 / Pf-5) protein is Ribosomal RNA small subunit methyltransferase A.